We begin with the raw amino-acid sequence, 310 residues long: N-acetyl-gamma-glutamyl-phosphate reductase (310 aa).

C117 is an active-site residue.

This sequence belongs to the NAGSA dehydrogenase family. Type 2 subfamily.

It is found in the cytoplasm. The enzyme catalyses N-acetyl-L-glutamate 5-semialdehyde + phosphate + NADP(+) = N-acetyl-L-glutamyl 5-phosphate + NADPH + H(+). It functions in the pathway amino-acid biosynthesis; L-arginine biosynthesis; N(2)-acetyl-L-ornithine from L-glutamate: step 3/4. Catalyzes the NADPH-dependent reduction of N-acetyl-5-glutamyl phosphate to yield N-acetyl-L-glutamate 5-semialdehyde. The polypeptide is N-acetyl-gamma-glutamyl-phosphate reductase (Brucella abortus (strain S19)).